Reading from the N-terminus, the 102-residue chain is Cytochrome c (102 aa).

G1 is modified (N-acetylglycine). Positions 1-11 (GDAERGKKLFE) are enriched in basic and acidic residues. Residues 1-26 (GDAERGKKLFESRAGQCHSSQKGVNS) form a disordered region. The heme c site is built by C17, H18, and M79. Residues 17–26 (CHSSQKGVNS) show a composition bias toward polar residues. The residue at position 85 (K85) is an N6,N6,N6-trimethyllysine.

The protein belongs to the cytochrome c family. Binds 1 heme c group covalently per subunit.

It localises to the mitochondrion intermembrane space. In terms of biological role, electron carrier protein. The oxidized form of the cytochrome c heme group can accept an electron from the heme group of the cytochrome c1 subunit of cytochrome reductase. Cytochrome c then transfers this electron to the cytochrome oxidase complex, the final protein carrier in the mitochondrial electron-transport chain. The chain is Cytochrome c from Euglena viridis (Cercaria viridis).